The following is a 537-amino-acid chain: Glucans biosynthesis protein D (537 aa).

The tat-type signal signal peptide spans 1-30; sequence MLMYRRDFLKSVTAAWVAFGLPNPLGGAFA.

It belongs to the OpgD/OpgG family. In terms of processing, predicted to be exported by the Tat system. The position of the signal peptide cleavage has not been experimentally proven.

It localises to the periplasm. It functions in the pathway glycan metabolism; osmoregulated periplasmic glucan (OPG) biosynthesis. In terms of biological role, probably involved in the control of the structural glucose backbone of osmoregulated periplasmic glucans (OPGs). In Xylella fastidiosa (strain M12), this protein is Glucans biosynthesis protein D.